A 360-amino-acid polypeptide reads, in one-letter code: Mitogen-activated protein kinase 14 (360 aa).

N-acetylserine is present on S2. The residue at position 2 (S2) is a Phosphoserine. T16 carries the phosphothreonine modification. Residues 24–308 (YQNLSPVGSG…AAQALAHAYF (285 aa)) enclose the Protein kinase domain. ATP contacts are provided by residues 30 to 38 (VGSGAYGSV) and K53. K53 is modified (N6-acetyllysine). Residue D150 is the Proton acceptor of the active site. N6-acetyllysine is present on K152. The residue at position 180 (T180) is a Phosphothreonine. The short motif at 180 to 182 (TGY) is the TXY element. The residue at position 182 (Y182) is a Phosphotyrosine. Y323 carries the phosphotyrosine; by ZAP70 modification.

Belongs to the protein kinase superfamily. CMGC Ser/Thr protein kinase family. MAP kinase subfamily. Component of a signaling complex containing at least AKAP13, PKN1, MAPK14, ZAK and MAP2K3. Within this complex, AKAP13 interacts directly with PKN1, which in turn recruits MAPK14, MAP2K3 and ZAK. Binds to a kinase interaction motif within the protein tyrosine phosphatase, PTPRR. This interaction retains MAPK14 in the cytoplasm and prevents nuclear accumulation. Interacts with SPAG9 and GADD45A. Interacts with CDC25B, CDC25C, DUSP1, DUSP10, DUSP16, NP60, SUPT20H and TAB1. Interacts with casein kinase II subunits CSNK2A1 and CSNK2B. Interacts with PPM1D. Interacts with CDK5RAP3; recruits PPM1D to MAPK14 and may regulate its dephosphorylation. Interacts with DUSP2; this interaction does not lead to catalytic activation of DUSP2 and dephosphrylation of MAPK14. Requires Mg(2+) as cofactor. Dually phosphorylated on Thr-180 and Tyr-182 by the MAP2Ks MAP2K3/MKK3, MAP2K4/MKK4 and MAP2K6/MKK6 in response to inflammatory cytokines, environmental stress or growth factors, which activates the enzyme. Dual phosphorylation can also be mediated by TAB1-mediated autophosphorylation. TCR engagement in T-cells also leads to Tyr-323 phosphorylation by ZAP70. Dephosphorylated and inactivated by DUPS1, DUSP10 and DUSP16. PPM1D also mediates dephosphorylation and inactivation of MAPK14. In terms of processing, acetylated at Lys-53 and Lys-152 by KAT2B and EP300. Acetylation at Lys-53 increases the affinity for ATP and enhances kinase activity. Lys-53 and Lys-152 are deacetylated by HDAC3. Post-translationally, ubiquitinated. Ubiquitination leads to degradation by the proteasome pathway.

It localises to the cytoplasm. It is found in the nucleus. The enzyme catalyses L-seryl-[protein] + ATP = O-phospho-L-seryl-[protein] + ADP + H(+). It catalyses the reaction L-threonyl-[protein] + ATP = O-phospho-L-threonyl-[protein] + ADP + H(+). Activated by cell stresses such as DNA damage, heat shock, osmotic shock, anisomycin and sodium arsenite, as well as pro-inflammatory stimuli such as bacterial lipopolysaccharide (LPS) and interleukin-1. Activation occurs through dual phosphorylation of Thr-180 and Tyr-182 by either of two dual specificity kinases, MAP2K3/MKK3 or MAP2K6/MKK6, and potentially also MAP2K4/MKK4, as well as by TAB1-mediated autophosphorylation. MAPK14 phosphorylated on both Thr-180 and Tyr-182 is 10-20-fold more active than MAPK14 phosphorylated only on Thr-180, whereas MAPK14 phosphorylated on Tyr-182 alone is inactive. whereas Thr-180 is necessary for catalysis, Tyr-182 may be required for auto-activation and substrate recognition. Phosphorylated at Tyr-323 by ZAP70 in an alternative activation pathway in response to TCR signaling in T-cells. This alternative pathway is inhibited by GADD45A. Inhibited by dual specificity phosphatases, such as DUSP1, DUSP10, and DUSP16. Specifically inhibited by the binding of pyridinyl-imidazole compounds, which are cytokine-suppressive anti-inflammatory drugs (CSAID). SB203580 is an inhibitor of MAPK14. In terms of biological role, serine/threonine kinase which acts as an essential component of the MAP kinase signal transduction pathway. MAPK14 is one of the four p38 MAPKs which play an important role in the cascades of cellular responses evoked by extracellular stimuli such as pro-inflammatory cytokines or physical stress leading to direct activation of transcription factors. Accordingly, p38 MAPKs phosphorylate a broad range of proteins and it has been estimated that they may have approximately 200 to 300 substrates each. Some of the targets are downstream kinases which are activated through phosphorylation and further phosphorylate additional targets. RPS6KA5/MSK1 and RPS6KA4/MSK2 can directly phosphorylate and activate transcription factors such as CREB1, ATF1, the NF-kappa-B isoform RELA/NFKB3, STAT1 and STAT3, but can also phosphorylate histone H3 and the nucleosomal protein HMGN1. RPS6KA5/MSK1 and RPS6KA4/MSK2 play important roles in the rapid induction of immediate-early genes in response to stress or mitogenic stimuli, either by inducing chromatin remodeling or by recruiting the transcription machinery. On the other hand, two other kinase targets, MAPKAPK2/MK2 and MAPKAPK3/MK3, participate in the control of gene expression mostly at the post-transcriptional level, by phosphorylating ZFP36 (tristetraprolin) and ELAVL1, and by regulating EEF2K, which is important for the elongation of mRNA during translation. MKNK1/MNK1 and MKNK2/MNK2, two other kinases activated by p38 MAPKs, regulate protein synthesis by phosphorylating the initiation factor EIF4E2. MAPK14 also interacts with casein kinase II, leading to its activation through autophosphorylation and further phosphorylation of TP53/p53. In the cytoplasm, the p38 MAPK pathway is an important regulator of protein turnover. For example, CFLAR is an inhibitor of TNF-induced apoptosis whose proteasome-mediated degradation is regulated by p38 MAPK phosphorylation. In a similar way, MAPK14 phosphorylates the ubiquitin ligase SIAH2, regulating its activity towards EGLN3. MAPK14 may also inhibit the lysosomal degradation pathway of autophagy by interfering with the intracellular trafficking of the transmembrane protein ATG9. Another function of MAPK14 is to regulate the endocytosis of membrane receptors by different mechanisms that impinge on the small GTPase RAB5A. In addition, clathrin-mediated EGFR internalization induced by inflammatory cytokines and UV irradiation depends on MAPK14-mediated phosphorylation of EGFR itself as well as of RAB5A effectors. Ectodomain shedding of transmembrane proteins is regulated by p38 MAPKs as well. In response to inflammatory stimuli, p38 MAPKs phosphorylate the membrane-associated metalloprotease ADAM17. Such phosphorylation is required for ADAM17-mediated ectodomain shedding of TGF-alpha family ligands, which results in the activation of EGFR signaling and cell proliferation. Another p38 MAPK substrate is FGFR1. FGFR1 can be translocated from the extracellular space into the cytosol and nucleus of target cells, and regulates processes such as rRNA synthesis and cell growth. FGFR1 translocation requires p38 MAPK activation. In the nucleus, many transcription factors are phosphorylated and activated by p38 MAPKs in response to different stimuli. Classical examples include ATF1, ATF2, ATF6, ELK1, PTPRH, DDIT3, TP53/p53 and MEF2C and MEF2A. The p38 MAPKs are emerging as important modulators of gene expression by regulating chromatin modifiers and remodelers. The promoters of several genes involved in the inflammatory response, such as IL6, IL8 and IL12B, display a p38 MAPK-dependent enrichment of histone H3 phosphorylation on 'Ser-10' (H3S10ph) in LPS-stimulated myeloid cells. This phosphorylation enhances the accessibility of the cryptic NF-kappa-B-binding sites marking promoters for increased NF-kappa-B recruitment. Phosphorylates CDC25B and CDC25C which is required for binding to 14-3-3 proteins and leads to initiation of a G2 delay after ultraviolet radiation. Phosphorylates TIAR following DNA damage, releasing TIAR from GADD45A mRNA and preventing mRNA degradation. The p38 MAPKs may also have kinase-independent roles, which are thought to be due to the binding to targets in the absence of phosphorylation. Protein O-Glc-N-acylation catalyzed by the OGT is regulated by MAPK14, and, although OGT does not seem to be phosphorylated by MAPK14, their interaction increases upon MAPK14 activation induced by glucose deprivation. This interaction may regulate OGT activity by recruiting it to specific targets such as neurofilament H, stimulating its O-Glc-N-acylation. Required in mid-fetal development for the growth of embryo-derived blood vessels in the labyrinth layer of the placenta. Also plays an essential role in developmental and stress-induced erythropoiesis, through regulation of EPO gene expression. Phosphorylates S100A9 at 'Thr-113'. The chain is Mitogen-activated protein kinase 14 from Rattus norvegicus (Rat).